A 316-amino-acid polypeptide reads, in one-letter code: Phosphatidylinositol mannoside acyltransferase (316 aa).

Residue H137 is the Proton acceptor of the active site. Residues H137 and R175 each coordinate hexadecanoyl-CoA. The active site involves E211. Residue E240 participates in hexadecanoyl-CoA binding.

The protein belongs to the LpxL/LpxM/LpxP family.

The protein localises to the cell inner membrane. It catalyses the reaction a 2,6-O-bis(alpha-D-mannopyranosyl)-1-phosphatidyl-1D-myo-inositol + an acyl-CoA = a 2-O-(alpha-D-mannosyl)-6-O-(6-O-acyl-alpha-D-mannosyl)-1-phosphatidyl-1D-myo-inositol + CoA. The enzyme catalyses a 1,2-diacyl-sn-glycero-3-phospho-[alpha-D-mannopyranosyl-(1&lt;-&gt;6)-D-myo-inositol] + an acyl-CoA = a 1,2-diacyl-sn-glycero-3-phospho-[alpha-D-6-acyl-mannopyranosyl-(1&lt;-&gt;6)-D-myo-inositol] + CoA. It functions in the pathway phospholipid metabolism; phosphatidylinositol metabolism. Functionally, catalyzes the transfer of a palmitoyl moiety from palmitoyl-CoA to the 6-position of the mannose ring linked to the 2-position of myo-inositol in phosphatidyl-myo-inositol monomannoside (PIM1) or dimannoside (PIM2). Essential for growth and survival in axenic cultures and during macrophage infection and in a mouse model of infection. The protein is Phosphatidylinositol mannoside acyltransferase of Mycobacterium tuberculosis (strain ATCC 25618 / H37Rv).